The primary structure comprises 301 residues: Sulfate adenylyltransferase subunit 2 2 (301 aa).

The protein belongs to the PAPS reductase family. CysD subfamily. In terms of assembly, heterodimer composed of CysD, the smaller subunit, and CysN.

It carries out the reaction sulfate + ATP + H(+) = adenosine 5'-phosphosulfate + diphosphate. It participates in sulfur metabolism; hydrogen sulfide biosynthesis; sulfite from sulfate: step 1/3. Functionally, with CysN forms the ATP sulfurylase (ATPS) that catalyzes the adenylation of sulfate producing adenosine 5'-phosphosulfate (APS) and diphosphate, the first enzymatic step in sulfur assimilation pathway. APS synthesis involves the formation of a high-energy phosphoric-sulfuric acid anhydride bond driven by GTP hydrolysis by CysN coupled to ATP hydrolysis by CysD. In Shewanella sediminis (strain HAW-EB3), this protein is Sulfate adenylyltransferase subunit 2 2.